The chain runs to 216 residues: L-fuculose phosphate aldolase (216 aa).

Residues 28–29 (GN), 43–44 (TG), and 71–72 (SS) each bind substrate. Residue Glu-73 is the Proton donor/acceptor of the active site. Positions 73, 92, 94, and 155 each coordinate Zn(2+).

It belongs to the aldolase class II family. AraD/FucA subfamily. As to quaternary structure, homotetramer. It depends on Zn(2+) as a cofactor.

The catalysed reaction is L-fuculose 1-phosphate = (S)-lactaldehyde + dihydroxyacetone phosphate. Its pathway is carbohydrate degradation; L-fucose degradation; L-lactaldehyde and glycerone phosphate from L-fucose: step 3/3. Functionally, involved in the degradation of L-fucose and D-arabinose. Catalyzes the reversible cleavage of L-fuculose 1-phosphate (Fuc1P) to yield dihydroxyacetone phosphate (DHAP) and L-lactaldehyde. This chain is L-fuculose phosphate aldolase, found in Haemophilus influenzae (strain ATCC 51907 / DSM 11121 / KW20 / Rd).